Consider the following 346-residue polypeptide: Putative cytochrome bd menaquinol oxidase subunit II (346 aa).

A run of 9 helical transmembrane segments spans residues 7-27 (ALIA…MATM), 63-83 (VFIV…TFVL), 87-107 (LLIP…FLVF), 119-139 (YISG…LPVT), 164-184 (AYSF…LLLA), 201-221 (KSAL…MVTM), 236-256 (FSWI…LFLP), 269-289 (LALV…GRAH), and 312-332 (ALFA…FFFW).

The protein belongs to the cytochrome ubiquinol oxidase subunit 2 family.

Its subcellular location is the cell membrane. Its function is as follows. May have a role in sporulation. Can compensate for the loss of cytochrome aa3. The protein is Putative cytochrome bd menaquinol oxidase subunit II (ythB) of Bacillus subtilis (strain 168).